We begin with the raw amino-acid sequence, 238 residues long: Complement C1q-like protein 4 (238 aa).

Positions 1–15 (MVLLLLVAIPLLVHS) are cleaved as a signal peptide. Positions 37-102 (SRGQGPDGAP…PGPGPGGAAP (66 aa)) are disordered. One can recognise a Collagen-like domain in the interval 53-96 (PPGAKGEVGRRGKAGLRGPPGPPGPRGPPGEPGRPGPPGPPGPG). Over residues 71–96 (PPGPPGPRGPPGEPGRPGPPGPPGPG) the composition is skewed to pro residues. Residues 105 to 238 (GYVPRIAFYA…TFSGFIIYPD (134 aa)) form the C1q domain.

As to quaternary structure, forms homooligomers, predominantly dimers or trimers. Forms heterooligomers with C1QL1, C1QL2 and C1QL3, when proteins are coexpressed; this interaction does not occur after secretion. Interacts with ADGRB3. Highly expressed in testis and adipose tissue, brown adipose tissue expressing higher levels than subcutaneous and visceral white adipose tissue. In gonadal fat pad, expressed at lower levels in adipocytes than in the stromal vascular fraction (VSP), which contains preadipocytes, fibroblasts, endothelial cells and occasional immune cells. Expression exhibits sexually dimorphism, with higher levels in females than in males.

It is found in the secreted. Functionally, may regulate the number of excitatory synapses that are formed on hippocampus neurons. Has no effect on inhibitory synapses. May inhibit adipocyte differentiation at an early stage of the process. The polypeptide is Complement C1q-like protein 4 (C1ql4) (Mus musculus (Mouse)).